The primary structure comprises 548 residues: Chaperonin GroEL (548 aa).

ATP-binding positions include 29–32, Lys50, 86–90, Gly414, 478–480, and Asp494; these read TMGP, DGTTT, and NAA.

The protein belongs to the chaperonin (HSP60) family. As to quaternary structure, forms a cylinder of 14 subunits composed of two heptameric rings stacked back-to-back. Interacts with the co-chaperonin GroES.

It is found in the cytoplasm. The enzyme catalyses ATP + H2O + a folded polypeptide = ADP + phosphate + an unfolded polypeptide.. Its function is as follows. Together with its co-chaperonin GroES, plays an essential role in assisting protein folding. The GroEL-GroES system forms a nano-cage that allows encapsulation of the non-native substrate proteins and provides a physical environment optimized to promote and accelerate protein folding. May play a protective role against the defense mechanisms generated by the infected macrophages. This chain is Chaperonin GroEL, found in Legionella pneumophila subsp. pneumophila (strain Philadelphia 1 / ATCC 33152 / DSM 7513).